Here is a 433-residue protein sequence, read N- to C-terminus: GTPase Obg (433 aa).

An Obg domain is found at 2 to 160 (PTFVDQTKIE…RVLRLELKLL (159 aa)). Positions 161 to 334 (ADVGLVGFPS…LMNDTATLVE (174 aa)) constitute an OBG-type G domain. GTP-binding positions include 167–174 (GFPSVGKS), 192–196 (FTTLT), 214–217 (DLPG), 284–287 (SQMD), and 315–317 (SSV). Positions 174 and 194 each coordinate Mg(2+). The region spanning 355–433 (YKAPQRNEFM…IGKFVFEFVQ (79 aa)) is the OCT domain.

Belongs to the TRAFAC class OBG-HflX-like GTPase superfamily. OBG GTPase family. As to quaternary structure, monomer. The cofactor is Mg(2+).

It localises to the cytoplasm. An essential GTPase which binds GTP, GDP and possibly (p)ppGpp with moderate affinity, with high nucleotide exchange rates and a fairly low GTP hydrolysis rate. Plays a role in control of the cell cycle, stress response, ribosome biogenesis and in those bacteria that undergo differentiation, in morphogenesis control. In Lactobacillus acidophilus (strain ATCC 700396 / NCK56 / N2 / NCFM), this protein is GTPase Obg.